The chain runs to 250 residues: Probable transcriptional regulatory protein SYNPCC7002_A1640 (250 aa).

Belongs to the TACO1 family.

Its subcellular location is the cytoplasm. This Picosynechococcus sp. (strain ATCC 27264 / PCC 7002 / PR-6) (Agmenellum quadruplicatum) protein is Probable transcriptional regulatory protein SYNPCC7002_A1640.